We begin with the raw amino-acid sequence, 776 residues long: General transcription and DNA repair factor IIH helicase subunit XPD (776 aa).

A Helicase ATP-binding domain is found at 7–277; that stretch reads DLLVYFPYSY…KKVDEKRLKD (271 aa). 42–49 lines the ATP pocket; the sequence is MPSGTGKT. C115, C133, C150, and C184 together coordinate [4Fe-4S] cluster. A DEAH box motif is present at residues 228–231; that stretch reads DEAH. Residues 736–776 form a disordered region; the sequence is HVEKQSTSKPPQQQNSAINSTITTSTTTTTTTSTISETHLT. Residues 742–754 are compositionally biased toward polar residues; the sequence is TSKPPQQQNSAIN. Positions 755–776 are enriched in low complexity; sequence STITTSTTTTTTTSTISETHLT.

It belongs to the helicase family. RAD3/XPD subfamily. In terms of assembly, component of the 7-subunit TFIIH core complex composed of XPB/repB, XPD/repD, gtf2h1, gtf2h2, gtf2h3, gtf2h4 and gtf2h5, which is active in NER. The core complex associates with the 3-subunit CDK-activating kinase (CAK) module composed of cycH/cyclin H, cdk7 and mnat1 to form the 10-subunit holoenzyme (holo-TFIIH) active in transcription. The cofactor is Mg(2+). [4Fe-4S] cluster serves as cofactor.

It localises to the nucleus. The enzyme catalyses Couples ATP hydrolysis with the unwinding of duplex DNA at the replication fork by translocating in the 5'-3' direction. This creates two antiparallel DNA single strands (ssDNA). The leading ssDNA polymer is the template for DNA polymerase III holoenzyme which synthesizes a continuous strand.. The catalysed reaction is ATP + H2O = ADP + phosphate + H(+). In terms of biological role, ATP-dependent 5'-3' DNA helicase, component of the general transcription and DNA repair factor IIH (TFIIH) core complex, which is involved in general and transcription-coupled nucleotide excision repair (NER) of damaged DNA and, when complexed to CDK-activating kinase (CAK), in transcription by RNA polymerase II. In NER, TFIIH acts by opening DNA around the lesion to allow the excision of the damaged oligonucleotide and its replacement by a new DNA fragment. The ATP-dependent helicase activity of XPD/repD is required for DNA opening. In transcription, TFIIH has an essential role in transcription initiation. When the pre-initiation complex (PIC) has been established, TFIIH is required for promoter opening and promoter escape. Phosphorylation of the C-terminal tail (CTD) of the largest subunit of RNA polymerase II by the kinase module CAK controls the initiation of transcription. XPD/repD acts by forming a bridge between CAK and the core-TFIIH complex. This is General transcription and DNA repair factor IIH helicase subunit XPD from Dictyostelium discoideum (Social amoeba).